The primary structure comprises 172 residues: Translation initiation factor IF-3 (172 aa).

The protein belongs to the IF-3 family. In terms of assembly, monomer.

The protein localises to the cytoplasm. Its function is as follows. IF-3 binds to the 30S ribosomal subunit and shifts the equilibrium between 70S ribosomes and their 50S and 30S subunits in favor of the free subunits, thus enhancing the availability of 30S subunits on which protein synthesis initiation begins. This is Translation initiation factor IF-3 from Campylobacter curvus (strain 525.92).